The following is a 147-amino-acid chain: Putative toxin MJ0142 (147 aa).

This sequence belongs to the UPF0332 family.

Functionally, putative toxin component of a putative type VII toxin-antitoxin (TA) system. Its cognate antitoxin might be MJ0141. This chain is Putative toxin MJ0142, found in Methanocaldococcus jannaschii (strain ATCC 43067 / DSM 2661 / JAL-1 / JCM 10045 / NBRC 100440) (Methanococcus jannaschii).